Here is a 446-residue protein sequence, read N- to C-terminus: Glucarate dehydratase (446 aa).

Residues H32, T103, Y150, and K205 each contribute to the substrate site. The Proton acceptor role is filled by K207. Mg(2+) contacts are provided by D235, E266, and N289. 235-237 (DPN) provides a ligand contact to substrate. Residues N289, 339–341 (HSN), H368, and R422 each bind substrate. Catalysis depends on H339, which acts as the Proton acceptor.

It belongs to the mandelate racemase/muconate lactonizing enzyme family. GlucD subfamily. In terms of assembly, homodimer. The cofactor is Mg(2+).

It catalyses the reaction D-glucarate = 5-dehydro-4-deoxy-D-glucarate + H2O. The protein operates within carbohydrate acid metabolism; D-glucarate degradation; 2,5-dioxopentanoate from D-glucarate: step 1/2. Catalyzes the dehydration of glucarate to 5-keto-4-deoxy-D-glucarate (5-kdGluc). Also acts on L-idarate. In Escherichia coli O157:H7, this protein is Glucarate dehydratase (gudD).